A 335-amino-acid chain; its full sequence is tRNA-splicing endonuclease (335 aa).

Residues tyrosine 269, histidine 280, and lysine 311 contribute to the active site.

This sequence belongs to the tRNA-intron endonuclease family. Archaeal long subfamily. In terms of assembly, homodimer.

It catalyses the reaction pretRNA = a 3'-half-tRNA molecule with a 5'-OH end + a 5'-half-tRNA molecule with a 2',3'-cyclic phosphate end + an intron with a 2',3'-cyclic phosphate and a 5'-hydroxyl terminus.. Functionally, endonuclease that removes tRNA introns. Cleaves pre-tRNA at the 5'- and 3'-splice sites to release the intron. The products are an intron and two tRNA half-molecules bearing 2',3' cyclic phosphate and 5'-OH termini. Recognizes a pseudosymmetric substrate in which 2 bulged loops of 3 bases are separated by a stem of 4 bp. The protein is tRNA-splicing endonuclease of Haloarcula marismortui (strain ATCC 43049 / DSM 3752 / JCM 8966 / VKM B-1809) (Halobacterium marismortui).